A 477-amino-acid polypeptide reads, in one-letter code: Glutamyl-tRNA reductase (477 aa).

Substrate contacts are provided by residues 49–52 (TCNR), S109, 114–116 (EGQ), and Q120. The active-site Nucleophile is the C50. 221-226 (GAGSMS) is a binding site for NADP(+).

The protein belongs to the glutamyl-tRNA reductase family. As to quaternary structure, homodimer.

The enzyme catalyses (S)-4-amino-5-oxopentanoate + tRNA(Glu) + NADP(+) = L-glutamyl-tRNA(Glu) + NADPH + H(+). It participates in porphyrin-containing compound metabolism; protoporphyrin-IX biosynthesis; 5-aminolevulinate from L-glutamyl-tRNA(Glu): step 1/2. In terms of biological role, catalyzes the NADPH-dependent reduction of glutamyl-tRNA(Glu) to glutamate 1-semialdehyde (GSA). This Thermobifida fusca (strain YX) protein is Glutamyl-tRNA reductase.